The sequence spans 302 residues: Oxygen-dependent coproporphyrinogen-III oxidase (302 aa).

S94 contacts substrate. A divalent metal cation is bound by residues H98 and H108. The Proton donor role is filled by H108. Residue 110–112 (NVR) coordinates substrate. H147 and H177 together coordinate a divalent metal cation. The tract at residues 242-277 (YVEFNLVYDRGTLFGLQTGGRTESILMSMPPLVRWQ) is important for dimerization. Residue 260–262 (GGR) participates in substrate binding.

The protein belongs to the aerobic coproporphyrinogen-III oxidase family. In terms of assembly, homodimer. A divalent metal cation is required as a cofactor.

It is found in the cytoplasm. It catalyses the reaction coproporphyrinogen III + O2 + 2 H(+) = protoporphyrinogen IX + 2 CO2 + 2 H2O. It functions in the pathway porphyrin-containing compound metabolism; protoporphyrin-IX biosynthesis; protoporphyrinogen-IX from coproporphyrinogen-III (O2 route): step 1/1. Its function is as follows. Involved in the heme biosynthesis. Catalyzes the aerobic oxidative decarboxylation of propionate groups of rings A and B of coproporphyrinogen-III to yield the vinyl groups in protoporphyrinogen-IX. In Shewanella sp. (strain MR-4), this protein is Oxygen-dependent coproporphyrinogen-III oxidase.